A 152-amino-acid polypeptide reads, in one-letter code: Cell division protein SepF (152 aa).

Residues 25–54 (EEREPVQEEKGTKDKAAFQERPQTGKQNVV) are disordered. The segment covering 28–42 (EPVQEEKGTKDKAAF) has biased composition (basic and acidic residues).

It belongs to the SepF family. Homodimer. Interacts with FtsZ.

Its subcellular location is the cytoplasm. Its function is as follows. Cell division protein that is part of the divisome complex and is recruited early to the Z-ring. Probably stimulates Z-ring formation, perhaps through the cross-linking of FtsZ protofilaments. Its function overlaps with FtsA. This is Cell division protein SepF from Bacillus pumilus (strain SAFR-032).